We begin with the raw amino-acid sequence, 1052 residues long: Carbamoyl phosphate synthase large chain (1052 aa).

Residues M1–D399 are carboxyphosphate synthetic domain. Residues R127, R167, G173, G174, K206, L208, E213, G239, V240, H241, Q282, and E296 each contribute to the ATP site. Residues R131 to L325 enclose the ATP-grasp 1 domain. Mg(2+) is bound by residues Q282, E296, and N298. Q282, E296, and N298 together coordinate Mn(2+). Positions L400 to I548 are oligomerization domain. Residues E549–N930 are carbamoyl phosphate synthetic domain. Residues S674 to I864 form the ATP-grasp 2 domain. Positions 710, 749, 751, 756, 780, 781, 782, 783, 823, and 835 each coordinate ATP. The Mg(2+) site is built by Q823, E835, and N837. 3 residues coordinate Mn(2+): Q823, E835, and N837. An MGS-like domain is found at N930–I1052. Positions R931–I1052 are allosteric domain.

Belongs to the CarB family. In terms of assembly, composed of two chains; the small (or glutamine) chain promotes the hydrolysis of glutamine to ammonia, which is used by the large (or ammonia) chain to synthesize carbamoyl phosphate. Tetramer of heterodimers (alpha,beta)4. Mg(2+) is required as a cofactor. Mn(2+) serves as cofactor.

The catalysed reaction is hydrogencarbonate + L-glutamine + 2 ATP + H2O = carbamoyl phosphate + L-glutamate + 2 ADP + phosphate + 2 H(+). It catalyses the reaction hydrogencarbonate + NH4(+) + 2 ATP = carbamoyl phosphate + 2 ADP + phosphate + 2 H(+). The protein operates within amino-acid biosynthesis; L-arginine biosynthesis; carbamoyl phosphate from bicarbonate: step 1/1. It participates in pyrimidine metabolism; UMP biosynthesis via de novo pathway; (S)-dihydroorotate from bicarbonate: step 1/3. In terms of biological role, large subunit of the glutamine-dependent carbamoyl phosphate synthetase (CPSase). CPSase catalyzes the formation of carbamoyl phosphate from the ammonia moiety of glutamine, carbonate, and phosphate donated by ATP, constituting the first step of 2 biosynthetic pathways, one leading to arginine and/or urea and the other to pyrimidine nucleotides. The large subunit (synthetase) binds the substrates ammonia (free or transferred from glutamine from the small subunit), hydrogencarbonate and ATP and carries out an ATP-coupled ligase reaction, activating hydrogencarbonate by forming carboxy phosphate which reacts with ammonia to form carbamoyl phosphate. The protein is Carbamoyl phosphate synthase large chain of Sulfolobus acidocaldarius (strain ATCC 33909 / DSM 639 / JCM 8929 / NBRC 15157 / NCIMB 11770).